A 427-amino-acid polypeptide reads, in one-letter code: Histidine--tRNA ligase (427 aa).

The protein belongs to the class-II aminoacyl-tRNA synthetase family. As to quaternary structure, homodimer.

The protein resides in the cytoplasm. It catalyses the reaction tRNA(His) + L-histidine + ATP = L-histidyl-tRNA(His) + AMP + diphosphate + H(+). The protein is Histidine--tRNA ligase (hisS) of Mycobacterium leprae (strain TN).